A 436-amino-acid chain; its full sequence is Chromosomal replication initiator protein DnaA (436 aa).

The segment at 1–69 (MLADEVIELL…ANIFEVKTGI (69 aa)) is domain I, interacts with DnaA modulators. Positions 69 to 99 (IKPVISITTQKNRVSIKAKDIDVKQIRTQSS) are domain II. The tract at residues 100-314 (LLNPSYTFES…SAIININAFA (215 aa)) is domain III, AAA+ region. The ATP site is built by Gly144, Gly146, Lys147, and Thr148. Residues 315-436 (NIMRQEITLE…ELKNKITSKE (122 aa)) are domain IV, binds dsDNA.

The protein belongs to the DnaA family. As to quaternary structure, oligomerizes as a right-handed, spiral filament on DNA at oriC.

The protein resides in the cytoplasm. Its function is as follows. Plays an essential role in the initiation and regulation of chromosomal replication. ATP-DnaA binds to the origin of replication (oriC) to initiate formation of the DNA replication initiation complex once per cell cycle. Binds the DnaA box (a 9 base pair repeat at the origin) and separates the double-stranded (ds)DNA. Forms a right-handed helical filament on oriC DNA; dsDNA binds to the exterior of the filament while single-stranded (ss)DNA is stabiized in the filament's interior. The ATP-DnaA-oriC complex binds and stabilizes one strand of the AT-rich DNA unwinding element (DUE), permitting loading of DNA polymerase. After initiation quickly degrades to an ADP-DnaA complex that is not apt for DNA replication. Binds acidic phospholipids. This chain is Chromosomal replication initiator protein DnaA, found in Campylobacter fetus subsp. fetus (strain 82-40).